Here is a 296-residue protein sequence, read N- to C-terminus: Protease HtpX homolog (296 aa).

2 helical membrane passes run V14–L34 and Y39–F59. Residue H143 participates in Zn(2+) binding. The active site involves E144. H147 is a binding site for Zn(2+). 2 helical membrane passes run I158–F178 and I195–V215. Position 224 (E224) interacts with Zn(2+).

It belongs to the peptidase M48B family. Zn(2+) is required as a cofactor.

It is found in the cell membrane. This Streptococcus agalactiae serotype III (strain NEM316) protein is Protease HtpX homolog.